Reading from the N-terminus, the 210-residue chain is Large ribosomal subunit protein uL3 (210 aa).

The disordered stretch occupies residues 121–150; sequence GGIKRHGFHRGPMAHGSKYHRRPGSLGAKG.

This sequence belongs to the universal ribosomal protein uL3 family. Part of the 50S ribosomal subunit. Forms a cluster with proteins L14 and L19.

Functionally, one of the primary rRNA binding proteins, it binds directly near the 3'-end of the 23S rRNA, where it nucleates assembly of the 50S subunit. The polypeptide is Large ribosomal subunit protein uL3 (Pelotomaculum thermopropionicum (strain DSM 13744 / JCM 10971 / SI)).